The primary structure comprises 204 residues: Thymidylate kinase (204 aa).

Residue 11-18 (GLDKSGKT) coordinates ATP.

This sequence belongs to the thymidylate kinase family.

The catalysed reaction is dTMP + ATP = dTDP + ADP. It participates in pyrimidine metabolism; dTTP biosynthesis. The polypeptide is Thymidylate kinase (TMK) (Rabbitpox virus (strain Utrecht) (RPV)).